The sequence spans 84 residues: NAD(P)H-quinone oxidoreductase subunit O (84 aa).

Belongs to the complex I NdhO subunit family. NDH-1 can be composed of about 15 different subunits; different subcomplexes with different compositions have been identified which probably have different functions.

It localises to the cellular thylakoid membrane. It carries out the reaction a plastoquinone + NADH + (n+1) H(+)(in) = a plastoquinol + NAD(+) + n H(+)(out). It catalyses the reaction a plastoquinone + NADPH + (n+1) H(+)(in) = a plastoquinol + NADP(+) + n H(+)(out). NDH-1 shuttles electrons from an unknown electron donor, via FMN and iron-sulfur (Fe-S) centers, to quinones in the respiratory and/or the photosynthetic chain. The immediate electron acceptor for the enzyme in this species is believed to be plastoquinone. Couples the redox reaction to proton translocation, and thus conserves the redox energy in a proton gradient. Cyanobacterial NDH-1 also plays a role in inorganic carbon-concentration. This Parasynechococcus marenigrum (strain WH8102) protein is NAD(P)H-quinone oxidoreductase subunit O.